The chain runs to 259 residues: GTP cyclohydrolase FolE2 (259 aa).

This sequence belongs to the GTP cyclohydrolase IV family.

It catalyses the reaction GTP + H2O = 7,8-dihydroneopterin 3'-triphosphate + formate + H(+). It functions in the pathway cofactor biosynthesis; 7,8-dihydroneopterin triphosphate biosynthesis; 7,8-dihydroneopterin triphosphate from GTP: step 1/1. In terms of biological role, converts GTP to 7,8-dihydroneopterin triphosphate. The sequence is that of GTP cyclohydrolase FolE2 from Thermosipho melanesiensis (strain DSM 12029 / CIP 104789 / BI429).